Consider the following 248-residue polypeptide: 2,3-bisphosphoglycerate-dependent phosphoglycerate mutase (248 aa).

Substrate-binding positions include 8 to 15 (RHGESTWN), 21 to 22 (TG), Arg-60, 87 to 90 (ERHY), Lys-98, 114 to 115 (RR), and 183 to 184 (GN). The Tele-phosphohistidine intermediate role is filled by His-9. Glu-87 (proton donor/acceptor) is an active-site residue.

Belongs to the phosphoglycerate mutase family. BPG-dependent PGAM subfamily. In terms of assembly, homodimer.

The catalysed reaction is (2R)-2-phosphoglycerate = (2R)-3-phosphoglycerate. Its pathway is carbohydrate degradation; glycolysis; pyruvate from D-glyceraldehyde 3-phosphate: step 3/5. Catalyzes the interconversion of 2-phosphoglycerate and 3-phosphoglycerate. The chain is 2,3-bisphosphoglycerate-dependent phosphoglycerate mutase from Paraburkholderia phymatum (strain DSM 17167 / CIP 108236 / LMG 21445 / STM815) (Burkholderia phymatum).